Consider the following 449-residue polypeptide: SWI/SNF chromatin-remodeling accessory subunit 2 (449 aa).

Polar residues predominate over residues Met1–Met11. The interval Met1–Lys56 is disordered. Residues Asn223 to Gln300 form the SWIB/MDM2 domain.

It belongs to the SMARCD family. In terms of assembly, component of the multiprotein chromatin-remodeling complexes SWI/SNF: SWI/SNF-A (BAF), SWI/SNF-B (PBAF) and related complexes. The canonical complex contains a catalytic subunit swsn-4, core subunits swsn-1 and swsn-5, and accessory subunits swsn-3, swsn-6, phf-10, dpff-1, swsn-9 and either ham-3/swsn-2.1 or swsn-2.2.

The protein resides in the nucleus. It localises to the nucleoplasm. It is found in the chromosome. Its subcellular location is the nucleus envelope. In terms of biological role, involved in transcriptional activation and repression of select genes by chromatin remodeling (alteration of DNA-nucleosome topology). Component of SWI/SNF chromatin remodeling complexes that carry out key enzymatic activities, changing chromatin structure by altering DNA-histone contacts within a nucleosome in an ATP-dependent manner. Probably regulates vulva development through the let-60/Ras pathway. Involved in nuclear reassembly after mitosis and recruitment of nuclear envelope protein, mel-28, to the nuclear periphery in the early embryo and in the adult germline. Involved in gonadogenesis. The sequence is that of SWI/SNF chromatin-remodeling accessory subunit 2 from Caenorhabditis elegans.